We begin with the raw amino-acid sequence, 327 residues long: ATPase ASNA1 homolog (327 aa).

26 to 33 (KGGVGKTT) lines the ATP pocket. Asp57 is a catalytic residue. ATP-binding residues include Glu238 and Asn265. Zn(2+)-binding residues include Cys274 and Cys277.

The protein belongs to the arsA ATPase family. Homodimer.

The protein resides in the cytoplasm. It is found in the endoplasmic reticulum. Functionally, ATPase required for the post-translational delivery of tail-anchored (TA) proteins to the endoplasmic reticulum. Recognizes and selectively binds the transmembrane domain of TA proteins in the cytosol. This complex then targets to the endoplasmic reticulum by membrane-bound receptors, where the tail-anchored protein is released for insertion. This process is regulated by ATP binding and hydrolysis. ATP binding drives the homodimer towards the closed dimer state, facilitating recognition of newly synthesized TA membrane proteins. ATP hydrolysis is required for insertion. Subsequently, the homodimer reverts towards the open dimer state, lowering its affinity for the membrane-bound receptor, and returning it to the cytosol to initiate a new round of targeting. The polypeptide is ATPase ASNA1 homolog (Entamoeba dispar (strain ATCC PRA-260 / SAW760)).